Reading from the N-terminus, the 273-residue chain is MMTTLRRRLPDIVQYSVLSLAAFLSIFPFIWMVIGTTNTTSQIIRGKVTFGTALFDNIASFFAQVDVPLVFWNSVKIALVGTALTLLVSSLAGYGFEMFRSKLRERVYTVILLTLMVPFAALMIPLFMLMGQAGLLNTHIAIMLPMIASAFIIFYFRQASKAFPTELRDAAKVDGLKEWQIFFYIYVPVMRSTYAAAFVIVFMLNWNNYLWPLIVLQSNDTKTITLVVSSLASAYSPEYGTVMIGTILATLPTLLVFFAMQRQFVQGMLGSVK.

Helical transmembrane passes span 15 to 35 (YSVLSLAAFLSIFPFIWMVIG), 77 to 97 (IALVGTALTLLVSSLAGYGFE), 110 to 130 (VILLTLMVPFAALMIPLFMLM), 134 to 154 (GLLNTHIAIMLPMIASAFIIF), 182 to 204 (FFYIYVPVMRSTYAAAFVIVFML), and 240 to 260 (GTVMIGTILATLPTLLVFFAM). The ABC transmembrane type-1 domain maps to 71–260 (FWNSVKIALV…LPTLLVFFAM (190 aa)).

The protein belongs to the binding-protein-dependent transport system permease family. MalFG subfamily.

Its subcellular location is the cell inner membrane. Functionally, part of the binding-protein-dependent transport system for lactose. Probably responsible for the translocation of the substrate across the membrane. The polypeptide is Lactose transport system permease protein LacG (lacG) (Rhizobium radiobacter (Agrobacterium tumefaciens)).